The primary structure comprises 872 residues: Metabotropic glutamate receptor 2 (872 aa).

Residues 1-18 (MESLLRFLALLLLRGAVA) form the signal peptide. At 19–568 (EGPAKKVLTL…EYIRWGDAWA (550 aa)) the chain is on the extracellular side. Cysteine 50 and cysteine 92 form a disulfide bridge. L-glutamate-binding residues include arginine 57, arginine 61, serine 145, alanine 166, and threonine 168. N-linked (GlcNAc...) asparagine glycans are attached at residues asparagine 203 and asparagine 286. 7 cysteine pairs are disulfide-bonded: cysteine 234-cysteine 518, cysteine 355-cysteine 362, cysteine 400-cysteine 407, cysteine 500-cysteine 519, cysteine 504-cysteine 522, cysteine 525-cysteine 537, and cysteine 540-cysteine 553. An L-glutamate-binding site is contributed by aspartate 295. An N-linked (GlcNAc...) asparagine glycan is attached at asparagine 338. Residue lysine 377 coordinates L-glutamate. N-linked (GlcNAc...) asparagine glycosylation is present at asparagine 402. Asparagine 547 is a glycosylation site (N-linked (GlcNAc...) asparagine). Residues 569 to 589 (VGPVTIACLGALATLFVLGVF) traverse the membrane as a helical segment. Residues 590–604 (VRHNATPVVKASGRE) are Cytoplasmic-facing. Residues 605 to 625 (LCYILLGGVFLCYCMTFIFIA) form a helical membrane-spanning segment. Residues 626–633 (KPSTAVCT) lie on the Extracellular side of the membrane. A disulfide bridge links cysteine 632 with cysteine 721. A helical transmembrane segment spans residues 634 to 651 (LRRLGLGTAFSVCYSALL). Over 652 to 679 (TKTNRIARIFGGAREGAQRPRFISPASQ) the chain is Cytoplasmic. The tract at residues 677–685 (ASQVAICLA) is important for interaction with HTR2A. A helical membrane pass occupies residues 680–700 (VAICLALISGQLLIVAAWLVV). Residues 701–726 (EAPGIGKETAPERREVVTLRCNHRDA) are Extracellular-facing. Residues 727–747 (SMLGSLAYNVLLIALCTLYAF) form a helical membrane-spanning segment. Residues 748–760 (KTRKCPENFNEAK) are Cytoplasmic-facing. Residues 761-781 (FIGFTMYTTCIIWLAFLPIFY) form a helical membrane-spanning segment. The Extracellular segment spans residues 782 to 798 (VTSSDYRVQTTTMCVSV). A helical transmembrane segment spans residues 799–819 (SLSGSVVLGCLFAPKLHIILF). Residues 820 to 872 (QPQKNVVSHRAPTSRFGSAAPRASANLGQGSGSQLVPTVCNGREVVDSTTSSL) lie on the Cytoplasmic side of the membrane.

This sequence belongs to the G-protein coupled receptor 3 family. Forms heterodimers with GRM3 or GRM4. Interacts with GNAI1. Interacts with TAMALIN. Interacts with HTR2A. Detected in neurons in brain cortex (at protein level).

The protein resides in the cell membrane. It localises to the synapse. It is found in the cell projection. Its subcellular location is the dendrite. Its function is as follows. Dimeric G protein-coupled receptor which is activated by the excitatory neurotransmitter L-glutamate. Plays critical roles in modulating synaptic transmission and neuronal excitability. Upon activation by glutamate, inhibits presynaptic calcium channels, reducing further glutamate release and dampening excitatory signaling. Mechanistically, ligand binding causes a conformation change that triggers signaling via guanine nucleotide-binding proteins (G proteins) and modulates the activity of down-stream effectors, such as adenylate cyclase. May mediate suppression of neurotransmission or may be involved in synaptogenesis or synaptic stabilization. The chain is Metabotropic glutamate receptor 2 (Grm2) from Mus musculus (Mouse).